The following is a 65-amino-acid chain: Large ribosomal subunit protein bL35 (65 aa).

Belongs to the bacterial ribosomal protein bL35 family.

The protein is Large ribosomal subunit protein bL35 of Thermoanaerobacter pseudethanolicus (strain ATCC 33223 / 39E) (Clostridium thermohydrosulfuricum).